The chain runs to 377 residues: Nitric oxide reductase FlRd-NAD(+) reductase (377 aa).

The protein belongs to the FAD-dependent oxidoreductase family. The cofactor is FAD.

The protein localises to the cytoplasm. The catalysed reaction is 2 reduced [nitric oxide reductase rubredoxin domain] + NAD(+) + H(+) = 2 oxidized [nitric oxide reductase rubredoxin domain] + NADH. It functions in the pathway nitrogen metabolism; nitric oxide reduction. In terms of biological role, one of at least two accessory proteins for anaerobic nitric oxide (NO) reductase. Reduces the rubredoxin moiety of NO reductase. This chain is Nitric oxide reductase FlRd-NAD(+) reductase, found in Salmonella agona (strain SL483).